A 310-amino-acid chain; its full sequence is Deoxyribonuclease gamma (310 aa).

An N-terminal signal peptide occupies residues 1 to 25 (MSLHPASPRLASLLLFILALHDTLA). Residues 40–56 (KKENHEAMDIIVKIIKR) carry the Bipartite nuclear localization signal motif. Catalysis depends on residues Glu-105 and His-160. The cysteines at positions 199 and 236 are disulfide-linked. Residues 289 to 310 (SRAFTNNRKSVSLKKRKKGNRS) are not required for free DNA-nuclease activity but required for activity towards liposome-coated DNA. Residues 301-307 (LKKRKKG) carry the Nuclear localization signal motif.

It belongs to the DNase I family. It depends on Ca(2+) as a cofactor. Mg(2+) is required as a cofactor. Poly-ADP-ribosylated by PARP1. ADP-ribosylation negatively regulates enzymatic activity during apoptosis. As to expression, expressed at high levels in liver, spleen and testes. Expressed at lower levels in heart, lungs, skeletal muscle and kidney. Not expressed in brain. Predominantly expressed in macrophages; at protein level. Secreted by mononuclear phagocytes.

The protein localises to the nucleus. It is found in the endoplasmic reticulum. The protein resides in the secreted. Its activity is regulated as follows. Inhibited by zinc. Inhibited by heparin and proteolysis by plasmin. In terms of biological role, has DNA hydrolytic activity. Is capable of both single- and double-stranded DNA cleavage, producing DNA fragments with 3'-OH ends. Can cleave chromatin to nucleosomal units and cleaves nucleosomal and liposome-coated DNA. Acts in internucleosomal DNA fragmentation (INDF) during apoptosis and necrosis. The role in apoptosis includes myogenic and neuronal differentiation, and BCR-mediated clonal deletion of self-reactive B cells. Is active on chromatin in apoptotic cell-derived membrane-coated microparticles and thus suppresses anti-DNA autoimmunity. Together with DNASE1, plays a key role in degrading neutrophil extracellular traps (NETs). NETs are mainly composed of DNA fibers and are released by neutrophils to bind pathogens during inflammation. Degradation of intravascular NETs by DNASE1 and DNASE1L3 is required to prevent formation of clots that obstruct blood vessels and cause organ damage following inflammation. This Mus musculus (Mouse) protein is Deoxyribonuclease gamma.